The primary structure comprises 266 residues: Large ribosomal subunit protein uL2c (266 aa).

Positions 1–24 (MAIHLYKTSTPSTRNGTVDSQVKS) are disordered. Positions 7 to 24 (KTSTPSTRNGTVDSQVKS) are enriched in polar residues.

This sequence belongs to the universal ribosomal protein uL2 family. Part of the 50S ribosomal subunit.

Its subcellular location is the plastid. It localises to the chloroplast. The protein is Large ribosomal subunit protein uL2c (rpl2) of Nicotiana debneyi (Debney's tobacco).